The chain runs to 1314 residues: Tetratricopeptide repeat protein 21A (1314 aa).

TPR repeat units follow at residues 110–143 (STAL…SSGS), 214–247 (LPAL…DENN), 326–359 (ALVA…EENR), 494–527 (MEPL…DPTF), 529–561 (DAHL…NFQV), 565–598 (PLYH…PTSK), 616–649 (ASIL…FSGT), 721–754 (PHSS…NPHD), 755–788 (ASLV…SGQD), 790–821 (LCCE…DSGV), 831–863 (VKCL…QSRI), 883–916 (ASIC…SPTD), 918–950 (KVVL…EQTH), 951–984 (ERAA…APDN), 986–1018 (LVLN…SSRV), 1022–1055 (PGFN…STWG), 1195–1228 (EKSW…NKSC), 1230–1262 (RAYE…SHQA), and 1264–1297 (PAIG…HPKY).

This sequence belongs to the TTC21 family. As to quaternary structure, interacts with IFT20. Interacts with IFT52. Interacts with IFT140. Interacts with CEP78; regulating IFT20 stability and localization.

Its function is as follows. Intraflagellar transport (IFT)-associated protein required for spermatogenesis. Required for sperm flagellar formation and intraflagellar transport. The chain is Tetratricopeptide repeat protein 21A (Ttc21a) from Mus musculus (Mouse).